The sequence spans 528 residues: Protein arginine N-methyltransferase 3 (528 aa).

The interval 1–42 (MCSLAAGNGQGAELGPEPLELSDSGDDAGWEDEDADAEPAQG) is disordered. Residue Cys2 is modified to N-acetylcysteine. Residues Ser22 and Ser24 each carry the phosphoserine modification. A compositionally biased stretch (acidic residues) spans 23-37 (DSGDDAGWEDEDADA). The segment at 46 to 69 (TPCLFCDRLFRSAEETFSHCKLEH) adopts a C2H2-type zinc-finger fold. Ser169 carries the post-translational modification Phosphoserine. The interval 184 to 528 (MKQFAQDFVM…NSSTQTYSLQ (345 aa)) is mediates interaction with ALDH1A1. One can recognise an SAM-dependent MTase PRMT-type domain in the interval 214 to 528 (DGVYFSSYGH…NSSTQTYSLQ (315 aa)). Residues Arg236, Gly260, Asp282, Ser284, Ile310, and Glu311 each contribute to the S-adenosyl-L-homocysteine site. Residues Glu326 and Glu335 contribute to the active site.

It belongs to the class I-like SAM-binding methyltransferase superfamily. Protein arginine N-methyltransferase family. As to quaternary structure, monomer and homodimer. Interacts with EPB41L3 (via FERM domain); the interaction is direct and inhibits the protein-arginine N-methyltransferase activity of PRMT3. Interacts with the 40S ribosomal protein RPS2. Interacts with ALDH1A1; the interaction is direct, inhibits ALDH1A1 aldehyde dehydrogenase activity and is independent of the methyltransferase activity of PRMT3. As to expression, ubiquitously expressed.

It localises to the cytoplasm. It is found in the cytosol. Its subcellular location is the nucleus. It catalyses the reaction L-arginyl-[protein] + S-adenosyl-L-methionine = N(omega)-methyl-L-arginyl-[protein] + S-adenosyl-L-homocysteine + H(+). The catalysed reaction is L-arginyl-[protein] + 2 S-adenosyl-L-methionine = N(omega),N(omega)-dimethyl-L-arginyl-[protein] + 2 S-adenosyl-L-homocysteine + 2 H(+). Its activity is regulated as follows. Inhibited by N-ethylmaleimide and high concentrations of zinc chloride. In terms of biological role, protein-arginine N-methyltransferase that catalyzes both the monomethylation and asymmetric dimethylation of the guanidino nitrogens of arginine residues in target proteins, and therefore falls into the group of type I methyltransferases. Catalyzes the asymmetric arginine dimethylation at multiple sites in the Arg/Gly-rich region of small ribosomal subunit protein uS5/RPS2. Also appears to methylate other ribosomal proteins. May regulate retinoic acid synthesis and signaling by inhibiting ALDH1A1 retinal dehydrogenase activity. Contributes to methylation of histone H4 'Arg-3', a specific tag for epigenetic transcriptional activation. Promotes osteogenesis. In Rattus norvegicus (Rat), this protein is Protein arginine N-methyltransferase 3.